The chain runs to 428 residues: Inward rectifier potassium channel 2 (428 aa).

Topologically, residues 1-81 are cytoplasmic; sequence MGSVRTNRYS…IFTTCVDIRW (81 aa). Cysteine 76 is modified (S-nitrosocysteine). A helical membrane pass occupies residues 82-106; the sequence is RWMLVIFCLAFVLSWLFFGCVFWLI. Over 107–128 the chain is Extracellular; it reads ALLHGDLDTSKVSKACVSEVNS. Residues 129 to 140 constitute an intramembrane region (helical; Pore-forming); that stretch reads FTAAFLFSIETQ. Positions 141–147 form an intramembrane region, pore-forming; the sequence is TTIGYGF. The short motif at 142–147 is the Selectivity filter element; sequence TIGYGF. At 148-156 the chain is on the extracellular side; the sequence is RCVTDECPI. A helical transmembrane segment spans residues 157–178; the sequence is AVFMVVFQSIVGCIIDAFIIGA. Topologically, residues 179 to 428 are cytoplasmic; it reads VMAKMAKPKK…PRPLRRESEI (250 aa). Positions 181–208 are polyphosphoinositide (PIP2)-binding; that stretch reads AKMAKPKKRNETLVFSHNAVIAMRDGKL. The tract at residues 383 to 428 is disordered; it reads TSKEEEEDSENGVPESTSTDSPPGIDLHNQASVPLEPRPLRRESEI. Residues 426–428 carry the PDZ-binding motif; the sequence is SEI.

Belongs to the inward rectifier-type potassium channel (TC 1.A.2.1) family. KCNJ2 subfamily. Homotetramer. Homomultimeric and heteromultimeric association with KCNJ4/Kir2.3. Can form heteromeric channels with Kir2.6/KCNJ18. Associates, via its PDZ-recognition domain, with a complex containing LIN7A, LIN7B, LIN7C, DLG1, CASK and APBA1. S-nitrosylation increases the open probability and inward rectifying currents. In terms of tissue distribution, prominently expressed in the central nervous system. Also found in other excitable tissues such as heart and skeletal muscle.

It localises to the cell membrane. It is found in the sarcolemma. Its subcellular location is the T-tubule. It carries out the reaction K(+)(in) = K(+)(out). Activated by phosphatidylinositol 4,5 biphosphate (PtdIns(4,5)P2). Functionally, inward rectifier potassium channels are characterized by a greater tendency to allow potassium to flow into the cell rather than out of it. Their voltage dependence is regulated by the concentration of extracellular potassium; as external potassium is raised, the voltage range of the channel opening shifts to more positive voltages. The inward rectification is mainly due to the blockage of outward current by internal magnesium. Can be blocked by extracellular barium and cesium. Probably participates in establishing action potential waveform and excitability of neuronal and muscle tissues. In Mus musculus (Mouse), this protein is Inward rectifier potassium channel 2 (Kcnj2).